Consider the following 106-residue polypeptide: Pyrimidine/purine nucleoside phosphorylase (106 aa).

Belongs to the nucleoside phosphorylase PpnP family.

The catalysed reaction is a purine D-ribonucleoside + phosphate = a purine nucleobase + alpha-D-ribose 1-phosphate. The enzyme catalyses adenosine + phosphate = alpha-D-ribose 1-phosphate + adenine. It carries out the reaction cytidine + phosphate = cytosine + alpha-D-ribose 1-phosphate. It catalyses the reaction guanosine + phosphate = alpha-D-ribose 1-phosphate + guanine. The catalysed reaction is inosine + phosphate = alpha-D-ribose 1-phosphate + hypoxanthine. The enzyme catalyses thymidine + phosphate = 2-deoxy-alpha-D-ribose 1-phosphate + thymine. It carries out the reaction uridine + phosphate = alpha-D-ribose 1-phosphate + uracil. It catalyses the reaction xanthosine + phosphate = alpha-D-ribose 1-phosphate + xanthine. Functionally, catalyzes the phosphorolysis of diverse nucleosides, yielding D-ribose 1-phosphate and the respective free bases. Can use uridine, adenosine, guanosine, cytidine, thymidine, inosine and xanthosine as substrates. Also catalyzes the reverse reactions. In Burkholderia cenocepacia (strain ATCC BAA-245 / DSM 16553 / LMG 16656 / NCTC 13227 / J2315 / CF5610) (Burkholderia cepacia (strain J2315)), this protein is Pyrimidine/purine nucleoside phosphorylase.